The chain runs to 434 residues: Methylenetetrahydrofolate--tRNA-(uracil-5-)-methyltransferase TrmFO (434 aa).

FAD is bound at residue 9 to 14 (GAGLAG).

The protein belongs to the MnmG family. TrmFO subfamily. The cofactor is FAD.

It is found in the cytoplasm. It carries out the reaction uridine(54) in tRNA + (6R)-5,10-methylene-5,6,7,8-tetrahydrofolate + NADH + H(+) = 5-methyluridine(54) in tRNA + (6S)-5,6,7,8-tetrahydrofolate + NAD(+). It catalyses the reaction uridine(54) in tRNA + (6R)-5,10-methylene-5,6,7,8-tetrahydrofolate + NADPH + H(+) = 5-methyluridine(54) in tRNA + (6S)-5,6,7,8-tetrahydrofolate + NADP(+). Catalyzes the folate-dependent formation of 5-methyl-uridine at position 54 (M-5-U54) in all tRNAs. This Listeria innocua serovar 6a (strain ATCC BAA-680 / CLIP 11262) protein is Methylenetetrahydrofolate--tRNA-(uracil-5-)-methyltransferase TrmFO.